A 549-amino-acid polypeptide reads, in one-letter code: Lipase 5 (549 aa).

Positions 1–15 (MKLALALSLIASVAA) are cleaved as a signal peptide. A disulfide bridge connects residues Cys-75 and Cys-112. Ser-224 serves as the catalytic Acyl-ester intermediate. Cys-283 and Cys-292 are disulfide-bonded. A glycan (N-linked (GlcNAc...) asparagine) is linked at Asn-329. The active-site Charge relay system is the Glu-356. Asn-366 carries an N-linked (GlcNAc...) asparagine glycan. Residue His-464 is the Charge relay system of the active site.

It belongs to the type-B carboxylesterase/lipase family.

It carries out the reaction a triacylglycerol + H2O = a diacylglycerol + a fatty acid + H(+). This is Lipase 5 (LIP5) from Diutina rugosa (Yeast).